The primary structure comprises 317 residues: Beta-ketoacyl-[acyl-carrier-protein] synthase III (317 aa).

Active-site residues include C112 and H244. Positions 245–249 (QANLR) are ACP-binding. N274 is a catalytic residue.

Belongs to the thiolase-like superfamily. FabH family. In terms of assembly, homodimer.

Its subcellular location is the cytoplasm. The enzyme catalyses malonyl-[ACP] + acetyl-CoA + H(+) = 3-oxobutanoyl-[ACP] + CO2 + CoA. The protein operates within lipid metabolism; fatty acid biosynthesis. Functionally, catalyzes the condensation reaction of fatty acid synthesis by the addition to an acyl acceptor of two carbons from malonyl-ACP. Catalyzes the first condensation reaction which initiates fatty acid synthesis and may therefore play a role in governing the total rate of fatty acid production. Possesses both acetoacetyl-ACP synthase and acetyl transacylase activities. Its substrate specificity determines the biosynthesis of branched-chain and/or straight-chain of fatty acids. The protein is Beta-ketoacyl-[acyl-carrier-protein] synthase III of Salmonella typhi.